A 67-amino-acid chain; its full sequence is Protein AaeX (67 aa).

Helical transmembrane passes span 3-23 and 43-63; these read LFPV…ELLL and FVWH…YLLS.

The protein belongs to the AaeX family.

Its subcellular location is the cell membrane. This Cronobacter sakazakii (strain ATCC BAA-894) (Enterobacter sakazakii) protein is Protein AaeX.